The sequence spans 266 residues: Apolipoprotein A-I (266 aa).

An N-terminal signal peptide occupies residues 1–18 (MKAVVLTLAVLFLTGSQA). Repeat copies occupy residues 67–88 (LKLL…EQIG) and 89–110 (PVTQ…QEMN). Residues 67 to 266 (LKLLDNWDTL…DEATKKLNAQ (200 aa)) form a 10 X approximate tandem repeats region. Met-109 carries the post-translational modification Methionine sulfoxide. The 3; half-length repeat unit spans residues 111–121 (KDLEEVKKKVQ). Tandem repeats lie at residues 122 to 143 (PYLD…QKVA), 144 to 165 (PLGA…EKLS), 166 to 187 (PLGE…AQLA), 188 to 209 (PYSD…EGGG), and 210 to 231 (AALA…EKAK). The stretch at 232-242 (PALEDLRQGLL) is one 9; half-length repeat. Repeat 10 spans residues 243–266 (PVLESFRTSLLAAVDEATKKLNAQ).

Belongs to the apolipoprotein A1/A4/E family. In terms of assembly, homodimer. Interacts with APOA1BP and CLU. Component of a sperm activating protein complex (SPAP), consisting of APOA1, an immunoglobulin heavy chain, an immunoglobulin light chain and albumin. Interacts with NDRG1. Interacts with SCGB3A2. Interacts with NAXE and YJEFN3. Glycosylated. Post-translationally, palmitoylated. In terms of processing, phosphorylation sites are present in the extracellular medium.

The protein resides in the secreted. In terms of biological role, participates in the reverse transport of cholesterol from tissues to the liver for excretion by promoting cholesterol efflux from tissues and by acting as a cofactor for the lecithin cholesterol acyltransferase (LCAT). As part of the SPAP complex, activates spermatozoa motility. The polypeptide is Apolipoprotein A-I (APOA1) (Odobenus rosmarus divergens (Pacific walrus)).